The sequence spans 141 residues: Nucleoside diphosphate kinase (141 aa).

ATP-binding residues include lysine 11, phenylalanine 59, arginine 87, threonine 93, arginine 104, and asparagine 114. The active-site Pros-phosphohistidine intermediate is the histidine 117.

This sequence belongs to the NDK family. Homotetramer. Mg(2+) serves as cofactor.

It is found in the cytoplasm. It catalyses the reaction a 2'-deoxyribonucleoside 5'-diphosphate + ATP = a 2'-deoxyribonucleoside 5'-triphosphate + ADP. It carries out the reaction a ribonucleoside 5'-diphosphate + ATP = a ribonucleoside 5'-triphosphate + ADP. Its function is as follows. Major role in the synthesis of nucleoside triphosphates other than ATP. The ATP gamma phosphate is transferred to the NDP beta phosphate via a ping-pong mechanism, using a phosphorylated active-site intermediate. The chain is Nucleoside diphosphate kinase from Alkalilimnicola ehrlichii (strain ATCC BAA-1101 / DSM 17681 / MLHE-1).